The primary structure comprises 447 residues: N-succinylarginine dihydrolase (447 aa).

Residues 19 to 28, Asn110, and 137 to 138 each bind substrate; these read AGLSFGNEAS and HR. Residue Glu174 is part of the active site. Substrate is bound at residue Arg212. His248 is an active-site residue. The substrate site is built by Asp250 and Asn359. The active-site Nucleophile is Cys365.

It belongs to the succinylarginine dihydrolase family. As to quaternary structure, homodimer.

The catalysed reaction is N(2)-succinyl-L-arginine + 2 H2O + 2 H(+) = N(2)-succinyl-L-ornithine + 2 NH4(+) + CO2. It participates in amino-acid degradation; L-arginine degradation via AST pathway; L-glutamate and succinate from L-arginine: step 2/5. In terms of biological role, catalyzes the hydrolysis of N(2)-succinylarginine into N(2)-succinylornithine, ammonia and CO(2). This is N-succinylarginine dihydrolase from Escherichia coli O139:H28 (strain E24377A / ETEC).